A 266-amino-acid chain; its full sequence is Thymidylate synthase (266 aa).

Arginine 24 is a binding site for dUMP. Histidine 54 contributes to the (6R)-5,10-methylene-5,6,7,8-tetrahydrofolate binding site. 129–130 (RR) is a dUMP binding site. The active-site Nucleophile is cysteine 149. DUMP is bound by residues 169–172 (RSAD), asparagine 180, and 210–212 (HIY). Position 172 (aspartate 172) interacts with (6R)-5,10-methylene-5,6,7,8-tetrahydrofolate. Alanine 265 is a (6R)-5,10-methylene-5,6,7,8-tetrahydrofolate binding site.

The protein belongs to the thymidylate synthase family. Bacterial-type ThyA subfamily. As to quaternary structure, homodimer.

Its subcellular location is the cytoplasm. The enzyme catalyses dUMP + (6R)-5,10-methylene-5,6,7,8-tetrahydrofolate = 7,8-dihydrofolate + dTMP. It participates in pyrimidine metabolism; dTTP biosynthesis. In terms of biological role, catalyzes the reductive methylation of 2'-deoxyuridine-5'-monophosphate (dUMP) to 2'-deoxythymidine-5'-monophosphate (dTMP) while utilizing 5,10-methylenetetrahydrofolate (mTHF) as the methyl donor and reductant in the reaction, yielding dihydrofolate (DHF) as a by-product. This enzymatic reaction provides an intracellular de novo source of dTMP, an essential precursor for DNA biosynthesis. The chain is Thymidylate synthase from Mycobacterium bovis (strain ATCC BAA-935 / AF2122/97).